Here is a 235-residue protein sequence, read N- to C-terminus: Phosphoribosylaminoimidazole-succinocarboxamide synthase (235 aa).

This sequence belongs to the SAICAR synthetase family.

The enzyme catalyses 5-amino-1-(5-phospho-D-ribosyl)imidazole-4-carboxylate + L-aspartate + ATP = (2S)-2-[5-amino-1-(5-phospho-beta-D-ribosyl)imidazole-4-carboxamido]succinate + ADP + phosphate + 2 H(+). It functions in the pathway purine metabolism; IMP biosynthesis via de novo pathway; 5-amino-1-(5-phospho-D-ribosyl)imidazole-4-carboxamide from 5-amino-1-(5-phospho-D-ribosyl)imidazole-4-carboxylate: step 1/2. The polypeptide is Phosphoribosylaminoimidazole-succinocarboxamide synthase (Exiguobacterium sibiricum (strain DSM 17290 / CCUG 55495 / CIP 109462 / JCM 13490 / 255-15)).